The chain runs to 154 residues: UPF0127 protein TSIB_1463 (154 aa).

Belongs to the UPF0127 family.

The polypeptide is UPF0127 protein TSIB_1463 (Thermococcus sibiricus (strain DSM 12597 / MM 739)).